The following is a 346-amino-acid chain: tRNA N6-adenosine threonylcarbamoyltransferase (346 aa).

Fe cation-binding residues include His111 and His115. Residues 134–138, Asp167, Gly180, and Asn277 each bind substrate; that span reads LVSGG. Fe cation is bound at residue Asp305.

The protein belongs to the KAE1 / TsaD family. Fe(2+) serves as cofactor.

Its subcellular location is the cytoplasm. It carries out the reaction L-threonylcarbamoyladenylate + adenosine(37) in tRNA = N(6)-L-threonylcarbamoyladenosine(37) in tRNA + AMP + H(+). Functionally, required for the formation of a threonylcarbamoyl group on adenosine at position 37 (t(6)A37) in tRNAs that read codons beginning with adenine. Is involved in the transfer of the threonylcarbamoyl moiety of threonylcarbamoyl-AMP (TC-AMP) to the N6 group of A37, together with TsaE and TsaB. TsaD likely plays a direct catalytic role in this reaction. This Bordetella bronchiseptica (strain ATCC BAA-588 / NCTC 13252 / RB50) (Alcaligenes bronchisepticus) protein is tRNA N6-adenosine threonylcarbamoyltransferase.